Consider the following 157-residue polypeptide: Endoribonuclease YbeY (157 aa).

The Zn(2+) site is built by histidine 114, histidine 118, and histidine 124.

The protein belongs to the endoribonuclease YbeY family. The cofactor is Zn(2+).

Its subcellular location is the cytoplasm. In terms of biological role, single strand-specific metallo-endoribonuclease involved in late-stage 70S ribosome quality control and in maturation of the 3' terminus of the 16S rRNA. This Salmonella dublin (strain CT_02021853) protein is Endoribonuclease YbeY.